The sequence spans 230 residues: Cytochrome c oxidase subunit 2 (230 aa).

The Mitochondrial intermembrane segment spans residues Met1–Ser14. Residues Pro15–Met45 traverse the membrane as a helical segment. Topologically, residues Val46–Gln59 are mitochondrial matrix. A helical membrane pass occupies residues Glu60 to Met87. Residues Asp88 to Ala230 are Mitochondrial intermembrane-facing. The Cu cation site is built by His161, Cys196, Glu198, Cys200, His204, and Met207. Residue Glu198 participates in Mg(2+) binding.

Belongs to the cytochrome c oxidase subunit 2 family. In terms of assembly, component of the cytochrome c oxidase (complex IV, CIV), a multisubunit enzyme composed of 14 subunits. The complex is composed of a catalytic core of 3 subunits MT-CO1, MT-CO2 and MT-CO3, encoded in the mitochondrial DNA, and 11 supernumerary subunits COX4I, COX5A, COX5B, COX6A, COX6B, COX6C, COX7A, COX7B, COX7C, COX8 and NDUFA4, which are encoded in the nuclear genome. The complex exists as a monomer or a dimer and forms supercomplexes (SCs) in the inner mitochondrial membrane with NADH-ubiquinone oxidoreductase (complex I, CI) and ubiquinol-cytochrome c oxidoreductase (cytochrome b-c1 complex, complex III, CIII), resulting in different assemblies (supercomplex SCI(1)III(2)IV(1) and megacomplex MCI(2)III(2)IV(2)). Found in a complex with TMEM177, COA6, COX18, COX20, SCO1 and SCO2. Interacts with TMEM177 in a COX20-dependent manner. Interacts with COX20. Interacts with COX16. It depends on Cu cation as a cofactor.

The protein resides in the mitochondrion inner membrane. It catalyses the reaction 4 Fe(II)-[cytochrome c] + O2 + 8 H(+)(in) = 4 Fe(III)-[cytochrome c] + 2 H2O + 4 H(+)(out). Functionally, component of the cytochrome c oxidase, the last enzyme in the mitochondrial electron transport chain which drives oxidative phosphorylation. The respiratory chain contains 3 multisubunit complexes succinate dehydrogenase (complex II, CII), ubiquinol-cytochrome c oxidoreductase (cytochrome b-c1 complex, complex III, CIII) and cytochrome c oxidase (complex IV, CIV), that cooperate to transfer electrons derived from NADH and succinate to molecular oxygen, creating an electrochemical gradient over the inner membrane that drives transmembrane transport and the ATP synthase. Cytochrome c oxidase is the component of the respiratory chain that catalyzes the reduction of oxygen to water. Electrons originating from reduced cytochrome c in the intermembrane space (IMS) are transferred via the dinuclear copper A center (CU(A)) of subunit 2 and heme A of subunit 1 to the active site in subunit 1, a binuclear center (BNC) formed by heme A3 and copper B (CU(B)). The BNC reduces molecular oxygen to 2 water molecules using 4 electrons from cytochrome c in the IMS and 4 protons from the mitochondrial matrix. The polypeptide is Cytochrome c oxidase subunit 2 (mt-co2) (Gadus morhua (Atlantic cod)).